Here is a 791-residue protein sequence, read N- to C-terminus: Cellobionic acid phosphorylase (791 aa).

The active-site Proton donor is D478.

It belongs to the glycosyl hydrolase 94 family. Cellobionic acid phosphorylase subfamily. Homodimer.

The enzyme catalyses 4-O-beta-D-glucopyranosyl-D-gluconate + phosphate = D-gluconate + alpha-D-glucose 1-phosphate. It functions in the pathway glycan metabolism; cellulose degradation. Catalyzes the reversible phosphorolysis of cellobionic acid (4-O-beta-D-glucopyranosyl-D-gluconate), a probable step in cellulose degradation. May be part of a metabolic pathway where cellobionic acid is converted into alpha-D-glucose 1-phosphate and D-gluconic acid to enter glycolysis and the pentose phosphate pathway, respectively. Produces 4-O-beta-D-glucopyranosyl-D-glucuronate from alpha-D-glucose 1-phosphate and D-glucuronate with low activity in the synthetic direction. The protein is Cellobionic acid phosphorylase of Neurospora crassa (strain ATCC 24698 / 74-OR23-1A / CBS 708.71 / DSM 1257 / FGSC 987).